We begin with the raw amino-acid sequence, 276 residues long: Extracellular metalloprotease 1 (276 aa).

Residues 1–18 (MRVSVPVLALAFGSLAAA) form the signal peptide. Residue histidine 191 participates in Zn(2+) binding. Glutamate 192 is a catalytic residue. Histidine 195 is a Zn(2+) binding site. The tract at residues 211 to 233 (GDYVSDTPPQRSPSSGCPVGRDS) is disordered. A disulfide bridge links cysteine 227 with cysteine 253.

This sequence belongs to the peptidase M43B family.

It localises to the secreted. Its function is as follows. Secreted metalloproteinase that allows assimilation of proteinaceous substrates. Pays a pivotal role as a pathogenicity determinant during infections and contributes to the ability of the pathogen to persist within the mammalian host. Digests an immunodominant cell surface antigen (SOWgp) and prevents host recognition of endospores during the phase of development when these fungal cells are most vulnerable to phagocytic cell defenses. The protein is Extracellular metalloprotease 1 (MEP1) of Coccidioides posadasii (strain C735) (Valley fever fungus).